A 2601-amino-acid polypeptide reads, in one-letter code: Centrosomal protein of 295 kDa (2601 aa).

Positions 1–560 (MKRKVVNTHK…KKTQPTGVGI (560 aa)) are necessary for centriole targeting and microtubule association. Ser-14 is subject to Phosphoserine. Coiled-coil stretches lie at residues 207–273 (KRPD…EDLA) and 500–552 (AARI…KRKK). Phosphoserine is present on residues Ser-654 and Ser-938. The tract at residues 1008–1029 (PSADTKSGKIQEQHSSKSEKGL) is disordered. The span at 1013 to 1027 (KSGKIQEQHSSKSEK) shows a compositional bias: basic and acidic residues. Coiled coils occupy residues 1053-1082 (LHDS…VELL) and 1498-1544 (IQSH…VSSE). Residues 1558–1580 (ADSERTQKSFPTKSNDTLPSSHR) form a disordered region. A compositionally biased stretch (polar residues) spans 1565–1577 (KSFPTKSNDTLPS). A Phosphoserine modification is found at Ser-1637. Residues 1728–1758 (QEKLLVQRQTALQQQIQKHEETLKDFFKDSQ) are a coiled coil. 3 stretches are compositionally biased toward basic and acidic residues: residues 1795–1827 (RHAD…DLGR), 1985–2003 (FSEH…KEEE), and 2100–2112 (DNRD…DSSS). Disordered stretches follow at residues 1795–1834 (RHAD…KPPV), 1979–2004 (LTDP…EEET), and 2085–2117 (HPDF…SHCA). A Phosphothreonine modification is found at Thr-2473. The ALMS motif stretch occupies residues 2478 to 2601 (SLQEAFIKRK…LEKLRAKNTC (124 aa)). The stretch at 2556 to 2581 (RLYNQLAEVKQQKEEKTKQEAYAQNR) forms a coiled coil.

As to quaternary structure, interacts (via ALMS motif) with microtubules; this interaction is direct.

The protein localises to the cytoplasm. It is found in the cytoskeleton. It localises to the microtubule organizing center. Its subcellular location is the centrosome. The protein resides in the centriole. The protein localises to the spindle. In terms of biological role, centriole-enriched microtubule-binding protein involved in centriole biogenesis. Essential for the generation of the distal portion of new-born centrioles in a CPAP- and CEP120-mediated elongation dependent manner during the cell cycle S/G2 phase after formation of the initiating cartwheel structure. Required for the recruitment of centriolar proteins, such as POC1B, POC5 and CEP135, into the distal portion of centrioles. Also required for centriole-to-centrosome conversion during mitotic progression, but is dispensable for cartwheel removal or centriole disengagement. Binds to and stabilizes centriolar microtubule. May be involved in ciliogenesis. This chain is Centrosomal protein of 295 kDa, found in Homo sapiens (Human).